Reading from the N-terminus, the 298-residue chain is Proline-rich protein 32 (298 aa).

Positions 36-56 are disordered; sequence CLSSKPEDDAEPWGQPQVPLR.

The chain is Proline-rich protein 32 (PRR32) from Homo sapiens (Human).